A 63-amino-acid polypeptide reads, in one-letter code: Large ribosomal subunit protein uL29 (63 aa).

The protein belongs to the universal ribosomal protein uL29 family.

The polypeptide is Large ribosomal subunit protein uL29 (Baumannia cicadellinicola subsp. Homalodisca coagulata).